The chain runs to 407 residues: O-antigen polymerase (407 aa).

11 consecutive transmembrane segments (helical) span residues 2–22 (LIIS…TLSV), 31–51 (VMVP…GIFV), 63–83 (YLFF…SYLY), 101–121 (YVFT…PVLM), 141–161 (YGIY…CAFF), 168–185 (LFCI…FLHG), 190–204 (IFSI…LSYI), 211–231 (FMFL…FFAY), 319–339 (ADFG…KGVL), 356–376 (FIMF…GWLF), and 382–402 (IAFM…RFVL).

The protein resides in the cell inner membrane. The catalysed reaction is n lipid-linked O-antigen repeat units = a lipid-linked O antigen + (n-1) polyisoprenyl diphosphate.. Its pathway is bacterial outer membrane biogenesis; LPS O-antigen biosynthesis. Functionally, polymerase involved in the biosynthesis of the lipopolysaccharide (LPS). Catalyzes the polymerization of the O-antigen repeat units on the periplasmic face of the inner membrane, leading to the formation of the lipid-linked O-antigen molecule. The chain is O-antigen polymerase (rfc) from Salmonella typhi.